The sequence spans 370 residues: 3,5-dihydroxyphenylacetyl-CoA synthase (370 aa).

Cysteine 158 is a catalytic residue.

Belongs to the thiolase-like superfamily. Chalcone/stilbene synthases family.

It catalyses the reaction 4 malonyl-CoA + 4 H(+) = (3,5-dihydroxyphenyl)acetyl-CoA + 4 CO2 + 3 CoA + H2O. The protein operates within antibiotic biosynthesis; vancomycin biosynthesis. Functionally, involved in the biosynthesis of the nonproteinogenic amino acid monomer (S)-3,5-dihydroxyphenylglycine (Dpg) responsible of the production of vancomycin and teicoplanin antibiotics. Catalyzes the Claisen condensation of four molecules of malonyl-CoA to yield 3,5-dihydroxyphenylacetyl-CoA (DPA-CoA) and three free coenzyme A (CoA). DpgA requires the presence of the dehydratases DpgB and DpgD to facilitate the aromatization of the DPA-S-DgpA or DPA-S-CoA intermediate. This Amycolatopsis orientalis (Nocardia orientalis) protein is 3,5-dihydroxyphenylacetyl-CoA synthase (dpgA).